The following is a 217-amino-acid chain: Ribonuclease HII 2 (217 aa).

In terms of domain architecture, RNase H type-2 spans 28–217 (GLLAGVDEAG…VREVLLERRP (190 aa)). Positions 34, 35, and 126 each coordinate a divalent metal cation.

This sequence belongs to the RNase HII family. The cofactor is Mn(2+). Mg(2+) serves as cofactor.

The protein localises to the cytoplasm. It catalyses the reaction Endonucleolytic cleavage to 5'-phosphomonoester.. Its function is as follows. Endonuclease that specifically degrades the RNA of RNA-DNA hybrids. The polypeptide is Ribonuclease HII 2 (Methylibium petroleiphilum (strain ATCC BAA-1232 / LMG 22953 / PM1)).